A 131-amino-acid chain; its full sequence is Chromatin accessibility complex protein 1 (131 aa).

At Ala-2 the chain carries N-acetylalanine. The stretch at 100–124 forms a coiled coil; the sequence is ASKYLKMLKEEKREEDEENDNDNES. Lys-102 is subject to N6-acetyllysine. The interval 109 to 131 is disordered; sequence EEKREEDEENDNDNESDHDEADS. Over residues 112-131 the composition is skewed to acidic residues; that stretch reads REEDEENDNDNESDHDEADS. Ser-124 bears the Phosphoserine mark.

As to quaternary structure, heterodimer with POLE3; binds to DNA. Component of the CHRAC ISWI chromatin remodeling complex at least composed of SMARCA5/SNF2H, BAZ1A/ACF1, CHRAC1 and POLE3; the complex preferentially binds DNA through the CHRAC1-POLE3 heterodimer and possesses ATP-dependent nucleosome-remodeling activity. Within the complex, the heterodimer with POLE3 interacts with SMARCA5/SNF2H; the interaction is direct and enhances nucleosome sliding activity by the SMARCA5/SNF2H and BAZ1A/ACF1 interaction. Within the complex, the heterodimer with POLE3 interacts with BAZ1A/ACF1; the interactions are direct. As to expression, expressed in heart, brain, placenta, lung, liver, skeletal muscle, kidney and pancreas.

The protein resides in the nucleus. Forms a complex with DNA polymerase epsilon subunit POLE3 and binds naked DNA, which is then incorporated into chromatin, aided by the nucleosome remodeling activity of ISWI/SNF2H and ACF1. Does not enhance nucleosome sliding activity of the ACF-5 ISWI chromatin remodeling complex. The sequence is that of Chromatin accessibility complex protein 1 (CHRAC1) from Homo sapiens (Human).